The following is a 912-amino-acid chain: uncharacterized protein (912 aa).

Composition is skewed to basic and acidic residues over residues 20-32 and 39-67; these read IERLREQGRAEPA and HEYEHTQGSRSHSSKDGSRKDRMSSEDKT. The tract at residues 20-91 is disordered; it reads IERLREQGRA…KPTLPQPETD (72 aa). Basic residues predominate over residues 68-77; that stretch reads RHKKLKHRSR.

This is an uncharacterized protein from Penicillium chrysogenum virus (isolate Caston/2003) (PcV).